The chain runs to 670 residues: NADH-ubiquinone oxidoreductase chain 5 (670 aa).

15 helical membrane passes run 3–23 (LLIV…GRFL), 36–56 (VSFS…GASA), 76–96 (FLFD…SSLV), 113–133 (FMCY…GDNF), 136–156 (LFLG…FWFT), 178–198 (LALG…STIF), 218–238 (ITLI…QIGL), 250–270 (TPVS…FMIA), 283–303 (LIVI…TGIL), 319–339 (LGYM…FHLM), 340–360 (NHAF…HAMS), 375–395 (FPLT…FPFL), 425–445 (VSVL…FLVP), 461–481 (IPMA…GYLA), and 618–638 (SGSV…FVTF).

The protein belongs to the complex I subunit 5 family.

The protein resides in the mitochondrion inner membrane. The enzyme catalyses a ubiquinone + NADH + 5 H(+)(in) = a ubiquinol + NAD(+) + 4 H(+)(out). Core subunit of the mitochondrial membrane respiratory chain NADH dehydrogenase (Complex I) that is believed to belong to the minimal assembly required for catalysis. Complex I functions in the transfer of electrons from NADH to the respiratory chain. The immediate electron acceptor for the enzyme is believed to be ubiquinone. This chain is NADH-ubiquinone oxidoreductase chain 5 (ND5), found in Triticum aestivum (Wheat).